The primary structure comprises 348 residues: MDIKQALARVAERLDLNTAEMQGVMRQIMTGQCSDAQIGAFLMGMRMKSESIDEIVGAALVMRELAAPVTIGVERLVDTCGTGGDGMNIFNVSTAAAFVVAAAGGRVAKHGNRAVSGKSGSADLLEAAGVYLELSPEQVARCVESVGVGFMFAPAHHGAMKHAIGPRRELGLRTLFNMLGPMTNPAGVKRQVLGVFSQALCRPLAEVMARLGSVHVLVVHAQDGLDEISLAAPTHIAELRNGEISEYLVQPEDFGIKSQSLIGLDIEGPQESLALIRDALGRRKTEHGQKAAEMIVLNAGAALYAADQAGSLKEGVALAHDALHTGLARDKLEELASITAVFRQENQA.

Residues glycine 81, 84-85 (GD), 91-94 (NVST), 109-117 (KHGNRAVSG), and serine 121 each bind 5-phospho-alpha-D-ribose 1-diphosphate. Glycine 81 contacts anthranilate. Serine 93 contacts Mg(2+). Residue asparagine 112 participates in anthranilate binding. Arginine 167 is an anthranilate binding site. Residues aspartate 226 and glutamate 227 each coordinate Mg(2+).

Belongs to the anthranilate phosphoribosyltransferase family. In terms of assembly, homodimer. The cofactor is Mg(2+).

The catalysed reaction is N-(5-phospho-beta-D-ribosyl)anthranilate + diphosphate = 5-phospho-alpha-D-ribose 1-diphosphate + anthranilate. Its pathway is amino-acid biosynthesis; L-tryptophan biosynthesis; L-tryptophan from chorismate: step 2/5. Its function is as follows. Catalyzes the transfer of the phosphoribosyl group of 5-phosphorylribose-1-pyrophosphate (PRPP) to anthranilate to yield N-(5'-phosphoribosyl)-anthranilate (PRA). This chain is Anthranilate phosphoribosyltransferase, found in Azotobacter vinelandii (strain DJ / ATCC BAA-1303).